Reading from the N-terminus, the 703-residue chain is uncharacterized protein (703 aa).

The first 23 residues, 1 to 23 (MKQIMIFLTSFMLLAMTGQTALA), serve as a signal peptide directing secretion. A helical transmembrane segment spans residues 673 to 693 (MYIGVLALIMVVAAVFIWIAV).

The protein resides in the cell membrane. This is an uncharacterized protein from Bacillus subtilis (strain 168).